The following is a 346-amino-acid chain: MVVESSSSPIIPGLTDDVAELCVSKIPRSSFQITSQVCRRWRSFLRSQHFAAVRKLTGTVEEFLCVLMESECGRDVYWEVFDASGNKLGQIPPVPGPLKRGFGVAVLDGGKIVFFGGYTEVEGSGINSTTVSASADVYEFDPANNSWRKLAGMNIPRYNFAFAEVNGLLYVIRGYSTDTYSLSNAEVYNPKTNQWSLMHCPNRPVWRGFAFAFSSKLYAVGNGSRFIDIYDPKTQTWEELNSEQSVSVYSYTVVRNKVYFMDRNMPGRLGVFDPEENSWSSVFVPPREGGFWVRLGVWNNKVLLFSRVCGHETLMYDLDKEKGSKWRVCDQIKPSASQLASVLINF.

An F-box domain is found at 9 to 56 (PIIPGLTDDVAELCVSKIPRSSFQITSQVCRRWRSFLRSQHFAAVRKL). Kelch repeat units lie at residues 62-109 (EFLC…VLDG), 111-167 (KIVF…EVNG), 168-215 (LLYV…AFSS), 217-257 (LYAV…VRNK), and 259-300 (YFMD…VWNN).

The polypeptide is Putative F-box/kelch-repeat protein At1g27420 (Arabidopsis thaliana (Mouse-ear cress)).